The sequence spans 438 residues: GTPase Der (438 aa).

EngA-type G domains lie at 2-164 (HKVA…PEDD) and 173-343 (IRIS…EKWQ). GTP contacts are provided by residues 8–15 (GRPNVGKS), 55–59 (DTGGL), 116–119 (NKID), 179–186 (GRPNVGKS), 226–230 (DTAGI), and 288–291 (NKWD). The KH-like domain occupies 344–428 (SRIGTSELNR…PVRLKWKEKG (85 aa)).

It belongs to the TRAFAC class TrmE-Era-EngA-EngB-Septin-like GTPase superfamily. EngA (Der) GTPase family. Associates with the 50S ribosomal subunit.

In terms of biological role, GTPase that plays an essential role in the late steps of ribosome biogenesis. The chain is GTPase Der from Deinococcus radiodurans (strain ATCC 13939 / DSM 20539 / JCM 16871 / CCUG 27074 / LMG 4051 / NBRC 15346 / NCIMB 9279 / VKM B-1422 / R1).